The primary structure comprises 401 residues: Probable sodium/metabolite cotransporter BASS1, chloroplastic (401 aa).

The N-terminal 70 residues, 1 to 70, are a transit peptide targeting the chloroplast; that stretch reads MASAISLSLL…RRSRFDFVPR (70 aa). Helical transmembrane passes span 92-112, 122-142, 156-176, 187-207, 212-232, 247-267, 278-298, 311-331, and 371-391; these read FVGE…CLLG, VTPN…GMTL, ELFA…FFVS, AGLI…VTYI, VALS…MTPL, LGLL…GAFL, VSPV…GYAI, QVVL…YLFS, and VPCA…AGIW.

The protein belongs to the bile acid:sodium symporter (BASS) (TC 2.A.28) family.

Its subcellular location is the membrane. The protein resides in the plastid. The protein localises to the chloroplast envelope. In terms of biological role, may function as sodium-coupled metabolite transporter across the chloroplast envelope. The polypeptide is Probable sodium/metabolite cotransporter BASS1, chloroplastic (BASS1) (Arabidopsis thaliana (Mouse-ear cress)).